The following is a 348-amino-acid chain: Tripartite motif-containing protein 16-like protein (348 aa).

A B30.2/SPRY domain is found at 139–337 (YWTSKPEPST…RIVDLGEEPE (199 aa)).

Belongs to the TRIM/RBCC family.

It is found in the cytoplasm. The sequence is that of Tripartite motif-containing protein 16-like protein (TRIM16L) from Homo sapiens (Human).